Consider the following 317-residue polypeptide: Beta-ketoacyl-[acyl-carrier-protein] synthase III (317 aa).

Catalysis depends on residues C112 and H244. The tract at residues 245–249 (QANLR) is ACP-binding. N274 is a catalytic residue.

This sequence belongs to the thiolase-like superfamily. FabH family. Homodimer.

The protein localises to the cytoplasm. It carries out the reaction malonyl-[ACP] + acetyl-CoA + H(+) = 3-oxobutanoyl-[ACP] + CO2 + CoA. It participates in lipid metabolism; fatty acid biosynthesis. In terms of biological role, catalyzes the condensation reaction of fatty acid synthesis by the addition to an acyl acceptor of two carbons from malonyl-ACP. Catalyzes the first condensation reaction which initiates fatty acid synthesis and may therefore play a role in governing the total rate of fatty acid production. Possesses both acetoacetyl-ACP synthase and acetyl transacylase activities. Its substrate specificity determines the biosynthesis of branched-chain and/or straight-chain of fatty acids. The protein is Beta-ketoacyl-[acyl-carrier-protein] synthase III of Salmonella typhimurium (strain LT2 / SGSC1412 / ATCC 700720).